Consider the following 349-residue polypeptide: Phosphate carrier protein, mitochondrial (349 aa).

Solcar repeat units follow at residues Lys47–Gln131, Tyr144–Leu229, and Glu246–Trp324. 6 helical membrane-spanning segments follow: residues Tyr48–Val68, Ala108–Phe128, Phe147–Leu167, Pro207–Val227, Leu248–Pro268, and Ile304–Trp324.

Belongs to the mitochondrial carrier (TC 2.A.29) family.

The protein resides in the mitochondrion inner membrane. Functionally, transport of phosphate groups from the cytosol to the mitochondrial matrix. The chain is Phosphate carrier protein, mitochondrial from Choristoneura fumiferana (Spruce budworm moth).